The following is a 177-amino-acid chain: Large ribosomal subunit protein uL6 (177 aa).

The protein belongs to the universal ribosomal protein uL6 family. Part of the 50S ribosomal subunit.

Its function is as follows. This protein binds to the 23S rRNA, and is important in its secondary structure. It is located near the subunit interface in the base of the L7/L12 stalk, and near the tRNA binding site of the peptidyltransferase center. In Vibrio vulnificus (strain CMCP6), this protein is Large ribosomal subunit protein uL6.